Reading from the N-terminus, the 143-residue chain is Sperm mitochondrial-associated cysteine-rich protein (143 aa).

A phosphoserine mark is found at serine 37, serine 44, and serine 110. Residues 101–143 (CCSSENKTESDSDTSGQTLEKGSQSPQSPPGAQGNWNQKKSNK) are disordered. The span at 113–126 (DTSGQTLEKGSQSP) shows a compositional bias: polar residues. A Phosphoserine modification is found at serine 128. Polar residues predominate over residues 134 to 143 (GNWNQKKSNK).

Testis. Is selectively expressed in the spermatids of seminiferous tubules.

It localises to the cytoplasm. It is found in the mitochondrion membrane. Functionally, involved in sperm motility. Its absence is associated with genetic background dependent male infertility. Infertility may be due to reduced sperm motility in the female reproductive tract and inability to penetrate the oocyte zona pellucida. The polypeptide is Sperm mitochondrial-associated cysteine-rich protein (Smcp) (Mus musculus (Mouse)).